The primary structure comprises 220 residues: Protein-L-isoaspartate O-methyltransferase (220 aa).

Ser-68 is an active-site residue.

It belongs to the methyltransferase superfamily. L-isoaspartyl/D-aspartyl protein methyltransferase family.

The protein localises to the cytoplasm. It catalyses the reaction [protein]-L-isoaspartate + S-adenosyl-L-methionine = [protein]-L-isoaspartate alpha-methyl ester + S-adenosyl-L-homocysteine. In terms of biological role, catalyzes the methyl esterification of L-isoaspartyl residues in peptides and proteins that result from spontaneous decomposition of normal L-aspartyl and L-asparaginyl residues. It plays a role in the repair and/or degradation of damaged proteins. This is Protein-L-isoaspartate O-methyltransferase from Dictyoglomus turgidum (strain DSM 6724 / Z-1310).